Consider the following 1019-residue polypeptide: Serine/threonine-protein kinase 31 (1019 aa).

In terms of domain architecture, Tudor spans 78 to 137 (NLDPNKIYGGLFSEDQCWYRCKVLKIISVEKCLVRYIDYGNTEILNRSDIVEIPLELQFS). Residues 298–355 (EKIKQDQKLIEENEKLKTEKDALLESYKALELKVEQIAQELQQEKAAAVDLTNHLEYT) are a coiled coil. A Protein kinase domain is found at 710–1019 (IGLLKYMNSG…TRNGEANFDC (310 aa)). Residues 716-724 (MNSGGLLTM) and Lys-737 contribute to the ATP site.

The protein belongs to the protein kinase superfamily. Ser/Thr protein kinase family. As to expression, testis specific.

It carries out the reaction L-seryl-[protein] + ATP = O-phospho-L-seryl-[protein] + ADP + H(+). It catalyses the reaction L-threonyl-[protein] + ATP = O-phospho-L-threonyl-[protein] + ADP + H(+). The chain is Serine/threonine-protein kinase 31 (STK31) from Homo sapiens (Human).